A 28-amino-acid chain; its full sequence is Omega-conotoxin-like CnVIIH (28 aa).

Disulfide bonds link C1-C16, C8-C20, and C15-C27. P7 is modified (4-hydroxyproline; partial). M12 bears the Methionine sulfoxide mark. At C27 the chain carries Cysteine amide.

This sequence belongs to the conotoxin O1 superfamily. In terms of tissue distribution, expressed by the venom duct.

It localises to the secreted. Omega-conotoxins act at presynaptic membranes, they bind and block voltage-gated calcium channels (Cav). This toxin blocks N-type calcium channels (Cav2.2/CACNA1B) with high potency. Unexpectedly, it does not show any blocking activity at amphibian neuromuscular junction. In vivo, when intracerebroventricularly injected into mice causes shaking activity, and, at higher doses, causes mild tremors. When injected intramuscularly into fish, it causes paralysis, and, at higher doses, causes death. This chain is Omega-conotoxin-like CnVIIH, found in Conus consors (Singed cone).